The following is a 225-amino-acid chain: 7-cyano-7-deazaguanine synthase (225 aa).

L10–A20 is a binding site for ATP. Residues C191, C199, C202, and C205 each contribute to the Zn(2+) site.

Belongs to the QueC family. The cofactor is Zn(2+).

It carries out the reaction 7-carboxy-7-deazaguanine + NH4(+) + ATP = 7-cyano-7-deazaguanine + ADP + phosphate + H2O + H(+). It functions in the pathway purine metabolism; 7-cyano-7-deazaguanine biosynthesis. Functionally, catalyzes the ATP-dependent conversion of 7-carboxy-7-deazaguanine (CDG) to 7-cyano-7-deazaguanine (preQ(0)). This chain is 7-cyano-7-deazaguanine synthase, found in Prochlorococcus marinus (strain NATL2A).